Here is a 393-residue protein sequence, read N- to C-terminus: Putative mitochondrial cysteine synthase (393 aa).

Residues 12–31 (LAWRECISIASVLIGAYASY) traverse the membrane as a helical segment. K86 is modified (N6-(pyridoxal phosphate)lysine). Residues 230–234 (GTGGT) and S338 each bind pyridoxal 5'-phosphate.

Belongs to the cysteine synthase/cystathionine beta-synthase family. The cofactor is pyridoxal 5'-phosphate.

It is found in the mitochondrion. It localises to the mitochondrion outer membrane. The enzyme catalyses O-acetyl-L-serine + hydrogen sulfide = L-cysteine + acetate. Its function is as follows. Putative cysteine synthase that catalyzes the conversion of O-acetyl-L-serine (OAS) into cysteine, the last step in the cysteine biosynthesis pathway. However, this CS-like protein is unlikely to function in cysteine biosynthesis. It seems that in S.cerevisiae cysteine biosynthesis occurs exclusively through the cystathionine pathway and not via direct incorporation of sulfur into OAS. This Saccharomyces cerevisiae (strain ATCC 204508 / S288c) (Baker's yeast) protein is Putative mitochondrial cysteine synthase.